Reading from the N-terminus, the 148-residue chain is Large ribosomal subunit protein cL37 (148 aa).

The N-terminal 65 residues, 1–65 (MALLCFNSLP…SSHGRIVVKA (65 aa)), are a transit peptide targeting the chloroplast. Position 66 is an N-acetylalanine (Ala-66). Residues 125-148 (LVRKRKMRKKGRWPPSKMKKNKNV) are disordered.

It belongs to the chloroplast-specific ribosomal protein cL37 family. In terms of assembly, part of the 50S ribosomal subunit.

Its subcellular location is the plastid. The protein resides in the chloroplast. The sequence is that of Large ribosomal subunit protein cL37 (PSRP5) from Arabidopsis thaliana (Mouse-ear cress).